Reading from the N-terminus, the 187-residue chain is UPF0301 protein YqgE (187 aa).

This sequence belongs to the UPF0301 (AlgH) family.

The polypeptide is UPF0301 protein YqgE (Escherichia coli O7:K1 (strain IAI39 / ExPEC)).